The primary structure comprises 1442 residues: Chitin synthase regulator SKT5 (1442 aa).

2 disordered regions span residues 1 to 54 and 72 to 117; these read MTHP…SPTL and LALK…RHLQ. Over residues 12–25 the composition is skewed to basic and acidic residues; that stretch reads NGKEPEKEEPRCVH. Positions 39–53 are enriched in polar residues; that stretch reads KSSSAITNENVSSPT. Positions 75-99 are enriched in basic and acidic residues; that stretch reads KEPENGKNKHPDSEQDDGDMKEQRS. 7 Sel1-like repeats span residues 198–236, 237–272, 273–309, 313–350, 351–387, 388–425, and 426–461; these read VESQ…KRGH, PDAA…SRKH, PGAQ…ENAT, PHAL…EMGY, APSA…QQNH, KEAC…EQGL, and AKAE…EHGD. Positions 550–1402 are disordered; sequence EKPKTATPTS…FSTPDSSSSK (853 aa). Over residues 605 to 617 the composition is skewed to pro residues; that stretch reads PKPPTPPPPPPPE. Residues 633 to 648 are compositionally biased toward basic residues; the sequence is FKSRLLRLGKMGKIRK. Over residues 747-758 the composition is skewed to low complexity; that stretch reads GPSSAAGADGAP. 3 stretches are compositionally biased toward basic and acidic residues: residues 762-804, 821-840, and 859-875; these read GEPK…KSEK, GSDK…KPSD, and RPDE…KDSE. Residues 876–891 show a composition bias toward low complexity; it reads STSPSSPKPTTGSAEP. 3 stretches are compositionally biased toward pro residues: residues 964–977, 1139–1158, and 1200–1220; these read PFPP…PPNA, RPGP…PSRP, and AMQP…PTGP. The segment covering 1232–1243 has biased composition (polar residues); the sequence is PSQSSMHQSGNG. The segment covering 1271–1282 has biased composition (pro residues); the sequence is PRPPRPTSPPPF. Residues 1295–1305 show a composition bias toward low complexity; sequence RGVMPPGSGPS. Pro residues-rich tracts occupy residues 1306–1322 and 1371–1386; these read MRPP…PRSP and DRPP…PPKT. The span at 1392-1402 shows a compositional bias: polar residues; it reads GFSTPDSSSSK.

This sequence belongs to the SKT5 family.

The protein localises to the cell membrane. In terms of biological role, activator of the chitin synthase CHS3 which polymerizes chitin, a structural polymer of the fungal cell wall. The polypeptide is Chitin synthase regulator SKT5 (Malassezia restricta (strain ATCC 96810 / NBRC 103918 / CBS 7877) (Seborrheic dermatitis infection agent)).